Reading from the N-terminus, the 505-residue chain is Pentatricopeptide repeat-containing protein At2g17033 (505 aa).

PPR repeat units follow at residues 243–277 (KTQA…KIKP), 278–312 (GLFE…GHKI), and 313–347 (DTVC…NVPF). A Smr domain is found at 413-503 (LDLHGMHLSS…AKGKTVKEWL (91 aa)).

The protein belongs to the PPR family. P subfamily.

This chain is Pentatricopeptide repeat-containing protein At2g17033, found in Arabidopsis thaliana (Mouse-ear cress).